We begin with the raw amino-acid sequence, 350 residues long: Histidinol-phosphate aminotransferase (350 aa).

At K210 the chain carries N6-(pyridoxal phosphate)lysine.

The protein belongs to the class-II pyridoxal-phosphate-dependent aminotransferase family. Histidinol-phosphate aminotransferase subfamily. In terms of assembly, homodimer. It depends on pyridoxal 5'-phosphate as a cofactor.

The enzyme catalyses L-histidinol phosphate + 2-oxoglutarate = 3-(imidazol-4-yl)-2-oxopropyl phosphate + L-glutamate. Its pathway is amino-acid biosynthesis; L-histidine biosynthesis; L-histidine from 5-phospho-alpha-D-ribose 1-diphosphate: step 7/9. The polypeptide is Histidinol-phosphate aminotransferase (Pseudomonas syringae pv. syringae (strain B728a)).